A 293-amino-acid chain; its full sequence is Cytidine deaminase 8 (293 aa).

2 CMP/dCMP-type deaminase domains span residues F20 to Q151 and E181 to K293. N61 to E63 contacts substrate. Residue H74 coordinates Zn(2+). The active-site Proton donor is the E76. C107 and C110 together coordinate Zn(2+).

It belongs to the cytidine and deoxycytidylate deaminase family. Homodimer. Zn(2+) serves as cofactor.

It catalyses the reaction cytidine + H2O + H(+) = uridine + NH4(+). The enzyme catalyses 2'-deoxycytidine + H2O + H(+) = 2'-deoxyuridine + NH4(+). Its function is as follows. This enzyme scavenges exogenous and endogenous cytidine and 2'-deoxycytidine for UMP synthesis. This is Cytidine deaminase 8 (CDA8) from Arabidopsis thaliana (Mouse-ear cress).